The sequence spans 206 residues: Ribonuclease HII (206 aa).

One can recognise an RNase H type-2 domain in the interval A27–H206. D33, E34, and D125 together coordinate a divalent metal cation.

This sequence belongs to the RNase HII family. Mn(2+) serves as cofactor. It depends on Mg(2+) as a cofactor.

The protein localises to the cytoplasm. The catalysed reaction is Endonucleolytic cleavage to 5'-phosphomonoester.. In terms of biological role, endonuclease that specifically degrades the RNA of RNA-DNA hybrids. This chain is Ribonuclease HII, found in Moorella thermoacetica (strain ATCC 39073 / JCM 9320).